Reading from the N-terminus, the 157-residue chain is Transcription elongation factor GreA (157 aa).

The segment at 1–24 is disordered; that stretch reads MDKFPMTPEGYHALDEELKRRQQE. Residues 12–24 are compositionally biased toward basic and acidic residues; the sequence is HALDEELKRRQQE. Residues 53-73 are a coiled coil; sequence EAQSLNEGRIAELEDKLSRAE.

The protein belongs to the GreA/GreB family.

Necessary for efficient RNA polymerase transcription elongation past template-encoded arresting sites. The arresting sites in DNA have the property of trapping a certain fraction of elongating RNA polymerases that pass through, resulting in locked ternary complexes. Cleavage of the nascent transcript by cleavage factors such as GreA or GreB allows the resumption of elongation from the new 3'terminus. GreA releases sequences of 2 to 3 nucleotides. In Beijerinckia indica subsp. indica (strain ATCC 9039 / DSM 1715 / NCIMB 8712), this protein is Transcription elongation factor GreA.